A 66-amino-acid polypeptide reads, in one-letter code: Large ribosomal subunit protein bL33c (66 aa).

This sequence belongs to the bacterial ribosomal protein bL33 family.

The protein localises to the plastid. The protein resides in the chloroplast. This is Large ribosomal subunit protein bL33c from Cycas taitungensis (Prince sago).